Here is a 603-residue protein sequence, read N- to C-terminus: MSSEHIQNKLALLPDQPGCYLMKDRQGTIIYVGKAKILKNRVRSYFSGTHDSKTQRLVQEIVDFEYIVTSSNVEALLLEINLIKKHDPRFNIRLKDDKTYPFIKITNERHPRLIITRQVKKDKGKYFGPYPNVYAANEVKRILDRLYPLRKCSTLPNKVCLYYHLGQCLAPCVFDVEASKYKEMQDEIVTFLNGGYKTVKNDLMKKMQEAAENMEFEKAGEFRDQINAIETTMEKQKMTMNDFVDRDVFGYAIDKGWMCVQVFFIRQGKLIERDVSQFPFYNDADEDFLTFIGQFYQKANHIPPKEIYLPDDVDSEAVQAVVPDTKIIVPQRGNKKDLVKLAYKNAKIALNEKFMLLERNEERTVGAVERLGEAMGIPTPSRVEAFDNSNIHGTDPVSAMVTFLDGKPSKNDYRKYKIKTVEGPDDYATMREVIRRRYWRVLKEELPMPDLILIDGGKGQIDSAKDVLTNELGLDIPVAGLAKDDKHRTSQLLFGDPLEIVPLERNSQEFYLLQRMQDEVHRFAITFHRQLRSKTGFQSILDGIPGVGPGRKKKLLKHFGSMKKLKEASVEEIKEAGVPLNVAEEVHKHITAFNEKAKNTEQK.

The region spanning Asp15–Ile92 is the GIY-YIG domain. In terms of domain architecture, UVR spans Lys197–Thr232.

It belongs to the UvrC family. As to quaternary structure, interacts with UvrB in an incision complex.

Its subcellular location is the cytoplasm. In terms of biological role, the UvrABC repair system catalyzes the recognition and processing of DNA lesions. UvrC both incises the 5' and 3' sides of the lesion. The N-terminal half is responsible for the 3' incision and the C-terminal half is responsible for the 5' incision. The protein is UvrABC system protein C of Listeria monocytogenes serotype 4b (strain F2365).